The sequence spans 435 residues: Casein kinase 1-like protein 12 (435 aa).

The region spanning 9–278 (YRLGRKIGSG…LKRIFRDLFI (270 aa)) is the Protein kinase domain. ATP-binding positions include 15 to 23 (IGSGSFGEI) and lysine 38. Aspartate 128 acts as the Proton acceptor in catalysis. Disordered regions lie at residues 313–363 (VGTS…RGPM) and 394–414 (LRNS…TRKH).

Belongs to the protein kinase superfamily. CK1 Ser/Thr protein kinase family. Casein kinase I subfamily. In terms of assembly, monomer. In terms of processing, autophosphorylated.

It localises to the cytoplasm. It catalyses the reaction L-seryl-[protein] + ATP = O-phospho-L-seryl-[protein] + ADP + H(+). The enzyme catalyses L-threonyl-[protein] + ATP = O-phospho-L-threonyl-[protein] + ADP + H(+). Casein kinases are operationally defined by their preferential utilization of acidic proteins such as caseins as substrates. It can phosphorylate a large number of proteins. The protein is Casein kinase 1-like protein 12 of Arabidopsis thaliana (Mouse-ear cress).